The sequence spans 330 residues: Phenylalanine--tRNA ligase alpha subunit (330 aa).

A Mg(2+)-binding site is contributed by E257.

It belongs to the class-II aminoacyl-tRNA synthetase family. Phe-tRNA synthetase alpha subunit type 1 subfamily. Tetramer of two alpha and two beta subunits. The cofactor is Mg(2+).

Its subcellular location is the cytoplasm. The catalysed reaction is tRNA(Phe) + L-phenylalanine + ATP = L-phenylalanyl-tRNA(Phe) + AMP + diphosphate + H(+). The chain is Phenylalanine--tRNA ligase alpha subunit from Nostoc punctiforme (strain ATCC 29133 / PCC 73102).